Reading from the N-terminus, the 286-residue chain is Cytosolic 5'-nucleotidase 3 (286 aa).

Residue Asp38 is the Nucleophile of the active site. Mg(2+) is bound by residues Asp38 and Asp40. The Proton donor role is filled by Asp40. Residues Glu85, Ser106, Ser153 to Ala154, and Lys202 each bind substrate. Asp227 is a Mg(2+) binding site.

Belongs to the pyrimidine 5'-nucleotidase family.

It localises to the cytoplasm. It carries out the reaction a ribonucleoside 5'-phosphate + H2O = a ribonucleoside + phosphate. Can act both as nucleotidase and as phosphotransferase. This is Cytosolic 5'-nucleotidase 3 (nt5c3) from Danio rerio (Zebrafish).